Here is a 232-residue protein sequence, read N- to C-terminus: Putative caffeoyl-CoA O-methyltransferase At1g67980 (232 aa).

Lys8 contributes to the substrate binding site. Residues Val52, Glu74, 76–77 (GV), Ser82, and Asp100 each bind S-adenosyl-L-methionine. Position 149 (Asp149) interacts with substrate. Asp149 contacts a divalent metal cation. S-adenosyl-L-methionine is bound at residue Asp151. A divalent metal cation contacts are provided by Asp175 and Asn176.

The protein belongs to the class I-like SAM-binding methyltransferase superfamily. Cation-dependent O-methyltransferase family. CCoAMT subfamily. A divalent metal cation is required as a cofactor.

It carries out the reaction (E)-caffeoyl-CoA + S-adenosyl-L-methionine = (E)-feruloyl-CoA + S-adenosyl-L-homocysteine + H(+). The protein operates within aromatic compound metabolism; phenylpropanoid biosynthesis. Methylates caffeoyl-CoA to feruloyl-CoA and 5-hydroxyferuloyl-CoA to sinapoyl-CoA. Plays a role in the synthesis of feruloylated polysaccharides. Involved in the reinforcement of the plant cell wall. Also involved in the responding to wounding or pathogen challenge by the increased formation of cell wall-bound ferulic acid polymers. The sequence is that of Putative caffeoyl-CoA O-methyltransferase At1g67980 from Arabidopsis thaliana (Mouse-ear cress).